The following is a 93-amino-acid chain: YcgL domain-containing protein KPN78578_22820 (93 aa).

One can recognise a YcgL domain in the interval 1–85 (MFCVIYRSTK…PSENLLKKHL (85 aa)).

This Klebsiella pneumoniae subsp. pneumoniae (strain ATCC 700721 / MGH 78578) protein is YcgL domain-containing protein KPN78578_22820.